Consider the following 503-residue polypeptide: ATP synthase subunit alpha (503 aa).

An ATP-binding site is contributed by Gly-170–Thr-177.

Belongs to the ATPase alpha/beta chains family. F-type ATPases have 2 components, CF(1) - the catalytic core - and CF(0) - the membrane proton channel. CF(1) has five subunits: alpha(3), beta(3), gamma(1), delta(1), epsilon(1). CF(0) has three main subunits: a(1), b(2) and c(9-12). The alpha and beta chains form an alternating ring which encloses part of the gamma chain. CF(1) is attached to CF(0) by a central stalk formed by the gamma and epsilon chains, while a peripheral stalk is formed by the delta and b chains.

The protein localises to the cell inner membrane. The enzyme catalyses ATP + H2O + 4 H(+)(in) = ADP + phosphate + 5 H(+)(out). In terms of biological role, produces ATP from ADP in the presence of a proton gradient across the membrane. The alpha chain is a regulatory subunit. The sequence is that of ATP synthase subunit alpha from Helicobacter pylori (strain HPAG1).